Here is a 369-residue protein sequence, read N- to C-terminus: Translocating chain-associated membrane protein 1-like 1 (369 aa).

Topologically, residues 1–29 (MGLRKKSTKNPPVLSQEFILQNHADIVSC) are cytoplasmic. Residues 30-50 (VGMFFLLGLVFEGTAEASIVF) traverse the membrane as a helical segment. Over 51-81 (LTLQHSVAVPAAEEQATGSKSLYYYGVKDLA) the chain is Lumenal. Residues 82–102 (TVFFYMLVAIIIHATIQEYVL) traverse the membrane as a helical segment. Topologically, residues 103 to 121 (DKINKRMQFTKAKQNKFNE) are cytoplasmic. The TLC domain occupies 117–326 (NKFNESGQFS…TLWLQRWVED (210 aa)). Residues 122–142 (SGQFSVFYFFSCIWGTFILIS) form a helical membrane-spanning segment. Over 143 to 164 (ENCLSDPTLIWKARPHSMMTFQ) the chain is Lumenal. The chain crosses the membrane as a helical span at residues 165–185 (MKFFYISQLAYWFHAFPELYF). Residues 186–196 (QKTKKQDIPRQ) are Cytoplasmic-facing. The helical transmembrane segment at 197–215 (LVYIGLHLFHITGAYLLYL) threads the bilayer. The Lumenal segment spans residues 216 to 219 (NHLG). Residues 220–242 (LLLLVLHYFVELLSHMCGLFYFS) traverse the membrane as a helical segment. Over 243 to 249 (DEKYQKG) the chain is Cytoplasmic. A helical membrane pass occupies residues 250 to 270 (ISLWAIVFILGRLVTLIVSVL). Residues 271–297 (TVGFHLAGSQNRNPDALTGNVNVLAAK) lie on the Lumenal side of the membrane. Residues 298-318 (IAVLSSSCTIQAYVTWNLITL) form a helical membrane-spanning segment. The Cytoplasmic portion of the chain corresponds to 319–369 (WLQRWVEDSNIQASCMKKKRSRSSKKRTENGVGVETSNRVDCPPKRKEKSS). Residues 335–369 (KKKRSRSSKKRTENGVGVETSNRVDCPPKRKEKSS) form a disordered region. Residues 360–369 (CPPKRKEKSS) show a composition bias toward basic and acidic residues.

Belongs to the TRAM family.

Its subcellular location is the endoplasmic reticulum membrane. Stimulatory or required for the translocation of secretory proteins across the ER membrane. The polypeptide is Translocating chain-associated membrane protein 1-like 1 (TRAM1L1) (Homo sapiens (Human)).